A 262-amino-acid polypeptide reads, in one-letter code: tRNA pseudouridine synthase A (262 aa).

Catalysis depends on Asp54, which acts as the Nucleophile. Tyr113 is a substrate binding site.

This sequence belongs to the tRNA pseudouridine synthase TruA family. In terms of assembly, homodimer.

It catalyses the reaction uridine(38/39/40) in tRNA = pseudouridine(38/39/40) in tRNA. In terms of biological role, formation of pseudouridine at positions 38, 39 and 40 in the anticodon stem and loop of transfer RNAs. In Lactobacillus acidophilus (strain ATCC 700396 / NCK56 / N2 / NCFM), this protein is tRNA pseudouridine synthase A.